The primary structure comprises 189 residues: Probable nicotinate-nucleotide adenylyltransferase (189 aa).

This sequence belongs to the NadD family.

It carries out the reaction nicotinate beta-D-ribonucleotide + ATP + H(+) = deamido-NAD(+) + diphosphate. The protein operates within cofactor biosynthesis; NAD(+) biosynthesis; deamido-NAD(+) from nicotinate D-ribonucleotide: step 1/1. Catalyzes the reversible adenylation of nicotinate mononucleotide (NaMN) to nicotinic acid adenine dinucleotide (NaAD). This Bacillus pumilus (strain SAFR-032) protein is Probable nicotinate-nucleotide adenylyltransferase.